Reading from the N-terminus, the 827-residue chain is Glycerol-3-phosphate acyltransferase (827 aa).

The short motif at 325–330 (CHRSHM) is the HXXXXD motif element.

This sequence belongs to the GPAT/DAPAT family.

It is found in the cell inner membrane. It catalyses the reaction sn-glycerol 3-phosphate + an acyl-CoA = a 1-acyl-sn-glycero-3-phosphate + CoA. The protein operates within phospholipid metabolism; CDP-diacylglycerol biosynthesis; CDP-diacylglycerol from sn-glycerol 3-phosphate: step 1/3. This is Glycerol-3-phosphate acyltransferase from Escherichia coli (strain SMS-3-5 / SECEC).